A 365-amino-acid chain; its full sequence is Glial fibrillary acidic protein (365 aa).

The tract at residues 1–5 (REVDR) is head. An IF rod domain is found at 2 to 310 (EVDRVMGLND…KLLEGEESRI (309 aa)). The coil 1A stretch occupies residues 6 to 37 (VMGLNDRFASYIEKVRFLEQQNKMLVAELNQL). Residues 38–48 (RGKEPSRLGDI) form a linker 1 region. Positions 49–147 (YQEELRELRR…EEEMRQLQEQ (99 aa)) are coil 1B. A linker 12 region spans residues 148–163 (LIAQQVHVDLDVSKPD). The segment at 164–185 (LTTALKEIRAQFEAMATSNMQE) is coil 2A. A linker 2 region spans residues 186–189 (TEEW). Residues 190-310 (YRSKFADLTD…KLLEGEESRI (121 aa)) are coil 2B. The tract at residues 311 to 365 (TVPVQNFTNLQFRDTSLDTKLTPEAHVKRSIVVRTVETRDGEIIKESTTERKDLP) is tail.

It belongs to the intermediate filament family.

This chain is Glial fibrillary acidic protein (gfap), found in Carassius auratus (Goldfish).